The following is a 355-amino-acid chain: UDP-N-acetylglucosamine--N-acetylmuramyl-(pentapeptide) pyrophosphoryl-undecaprenol N-acetylglucosamine transferase (355 aa).

UDP-N-acetyl-alpha-D-glucosamine is bound by residues R166, S196, and Q290.

Belongs to the glycosyltransferase 28 family. MurG subfamily.

The protein resides in the cell membrane. It carries out the reaction Mur2Ac(oyl-L-Ala-gamma-D-Glu-L-Lys-D-Ala-D-Ala)-di-trans,octa-cis-undecaprenyl diphosphate + UDP-N-acetyl-alpha-D-glucosamine = beta-D-GlcNAc-(1-&gt;4)-Mur2Ac(oyl-L-Ala-gamma-D-Glu-L-Lys-D-Ala-D-Ala)-di-trans,octa-cis-undecaprenyl diphosphate + UDP + H(+). It functions in the pathway cell wall biogenesis; peptidoglycan biosynthesis. In terms of biological role, cell wall formation. Catalyzes the transfer of a GlcNAc subunit on undecaprenyl-pyrophosphoryl-MurNAc-pentapeptide (lipid intermediate I) to form undecaprenyl-pyrophosphoryl-MurNAc-(pentapeptide)GlcNAc (lipid intermediate II). The chain is UDP-N-acetylglucosamine--N-acetylmuramyl-(pentapeptide) pyrophosphoryl-undecaprenol N-acetylglucosamine transferase from Staphylococcus haemolyticus (strain JCSC1435).